Reading from the N-terminus, the 166-residue chain is Phospholipase A2 myotoxin inhibitor protein (166 aa).

An N-terminal signal peptide occupies residues Met-1–Gly-19. The C-type lectin domain occupies Leu-46–Glu-161. Cystine bridges form between Cys-83-Cys-160 and Cys-138-Cys-152. An N-linked (GlcNAc...) asparagine glycan is attached at Asn-122.

The protein belongs to the alpha-type phospholipase A2 inhibitor family. In terms of assembly, oligomer. Homotrimer; non-covalently linked. In terms of processing, glycosylated. The glycosylation has no role in the association of this PLI and PA2 enzyme. Expressed by the liver.

The protein localises to the secreted. Functionally, this phospholipase A2 inhibitor binds directly phospholipase A2 in the presence or absence of calcium. Has anti-enzymatic, anti-myotoxic, anti-edema inducing, anti-cytotoxic, anti-bactericidal, and anti-lethal properties against basic and acidic phospholipases A2 from Bothrops venoms. The sequence is that of Phospholipase A2 myotoxin inhibitor protein from Bothrops moojeni (Lance-headed viper).